The primary structure comprises 592 residues: V-type ATP synthase alpha chain (592 aa).

232-239 (GPFGSGKT) is an ATP binding site.

This sequence belongs to the ATPase alpha/beta chains family.

The catalysed reaction is ATP + H2O + 4 H(+)(in) = ADP + phosphate + 5 H(+)(out). Functionally, produces ATP from ADP in the presence of a proton gradient across the membrane. The V-type alpha chain is a catalytic subunit. This is V-type ATP synthase alpha chain from Clostridioides difficile (strain 630) (Peptoclostridium difficile).